Reading from the N-terminus, the 1485-residue chain is DNA topoisomerase 2 (1485 aa).

Positions 1–16 are enriched in acidic residues; it reads MSIDADFSDYEDEASG. Residues 1–76 are disordered; it reads MSIDADFSDY…NGNGNSNVST (76 aa). Residues 46-59 are compositionally biased toward polar residues; it reads DLRQTSLTSMTASE. The span at 64–76 shows a compositional bias: low complexity; sequence VTNNGNGNSNVST. ATP contacts are provided by residues asparagine 136, asparagine 165, 193 to 195, and 206 to 213; these read SSN and GRNGYGAK. Residues 388–392 are interaction with DNA; sequence KKENK. 421-423 is an ATP binding site; that stretch reads QTK. The Toprim domain occupies 499–613; that stretch reads CVLILTEGDS…SLLQIPGFLI (115 aa). Mg(2+) contacts are provided by glutamate 505, aspartate 582, and aspartate 584. The Topo IIA-type catalytic domain maps to 745–1195; the sequence is IPSVVDGLKP…TPKELWLHDL (451 aa). Tyrosine 835 (O-(5'-phospho-DNA)-tyrosine intermediate) is an active-site residue. Residues 1019–1028 are interaction with DNA; the sequence is KLSRTQATSN. The span at 1216 to 1225 shows a compositional bias: basic and acidic residues; the sequence is EEQSSRDFVN. Residues 1216–1485 are disordered; sequence EEQSSRDFVN…EDVDDYDESD (270 aa). Positions 1226 to 1242 are enriched in basic residues; the sequence is RTKKKPRGKSTGTRKPR. Polar residues predominate over residues 1260–1273; sequence ESKPSTTNRKQQTL. Positions 1278–1307 are enriched in basic and acidic residues; it reads ASKEPEKSSDINIVKTEDNSHGLSVEENRI. A phosphoserine mark is found at serine 1310 and serine 1345. Residues 1387 to 1396 are compositionally biased toward basic residues; it reads AKNKGKKASS. The segment covering 1413 to 1425 has biased composition (polar residues); the sequence is GSSSTPKASSTNA. Serine 1433 bears the Phosphoserine mark. Positions 1473–1485 are enriched in acidic residues; sequence DNDEDVDDYDESD.

It belongs to the type II topoisomerase family. Homodimer. Requires Mg(2+) as cofactor. It depends on Mn(2+) as a cofactor. Ca(2+) is required as a cofactor. In terms of processing, phosphorylated at multiple sites at both extremities of the protein.

The protein localises to the nucleus. It carries out the reaction ATP-dependent breakage, passage and rejoining of double-stranded DNA.. In terms of biological role, control of topological states of DNA by transient breakage and subsequent rejoining of DNA strands. Topoisomerase II makes double-strand breaks. In Schizosaccharomyces pombe (strain 972 / ATCC 24843) (Fission yeast), this protein is DNA topoisomerase 2 (top2).